The chain runs to 121 residues: Large ribosomal subunit protein uL14c (121 aa).

The protein belongs to the universal ribosomal protein uL14 family. In terms of assembly, part of the 50S ribosomal subunit.

The protein resides in the plastid. The protein localises to the chloroplast. Functionally, binds to 23S rRNA. In Nephroselmis olivacea (Green alga), this protein is Large ribosomal subunit protein uL14c.